We begin with the raw amino-acid sequence, 1499 residues long: Collagen alpha-2(V) chain (1499 aa).

The first 26 residues, 1-26, serve as a signal peptide directing secretion; the sequence is MMANWAEARPLLILIVLLGQFVSIKA. In terms of domain architecture, VWFC spans 39–97; sequence IACTQNGQMYLNRDIWKPAPCQICVCDNGAILCDKIECQDVLDCADPVTPPGECCPVCS. Residues 104–1268 are disordered; sequence NTNFGRGRKG…DDKNKTDPGV (1165 aa). Over residues 170–182 the composition is skewed to pro residues; the sequence is PGAPGPPGHPSHP. Residues 212 to 227 show a composition bias toward low complexity; that stretch reads PGSVGPVGPRGPQGLQ. Positions 236–248 are enriched in pro residues; sequence TGPPGEPGDPGPM. Hydroxyproline occurs at positions 290, 293, and 296. Composition is skewed to low complexity over residues 322–340 and 427–443; these read EAGPTGPMGAMGPLGPRGM and TPGAKGPTGSPGTSGPP. The Cell attachment site motif lies at 506–508; sequence RGD. Low complexity-rich tracts occupy residues 604–626 and 694–709; these read SIGIRGQPGSMGLPGPKGSSGDP and DQGVPGDPGAVGPLGP. A hydroxyproline mark is found at Pro-611 and Pro-617. Basic and acidic residues predominate over residues 710-721; it reads RGERGNPGERGE. Residues 732-741 show a composition bias toward gly residues; sequence GMAGGHGPDG. Over residues 742–758 the composition is skewed to low complexity; sequence PKGSPGPSGTPGDTGPP. A compositionally biased stretch (basic and acidic residues) spans 776–787; sequence KGDRGGIGEKGA. The segment covering 826–841 has biased composition (low complexity); the sequence is PPGSRGNPGSRGENGP. Residues 894 to 903 show a composition bias toward gly residues; it reads GLKGGRGTQG. Residue Pro-919 is modified to 3-hydroxyproline; partial. Pro residues predominate over residues 919–929; it reads PPGPAGAPGPA. 6 short sequence motifs (cell attachment site) span residues 944–946, 1067–1069, 1070–1072, 1100–1102, 1127–1129, and 1136–1138; these read RGD. The segment covering 1063–1072 has biased composition (basic and acidic residues); it reads AVGERGDRGD. A compositionally biased stretch (low complexity) spans 1093 to 1114; that stretch reads APGDAGQRGDPGSRGPIGPPGR. Positions 1127–1141 are enriched in basic and acidic residues; it reads RGDKGDHGDRGDRGQ. A 3-hydroxyproline; partial modification is found at Pro-1156. Pro residues-rich tracts occupy residues 1171–1181 and 1211–1226; these read PFGPRGPPGPV and EGPPGEPGPPGPPGPP. A propeptide spans 1230 to 1499 (C-terminal propeptide); sequence TAALGDIMGH…GVEIGPVCFV (270 aa). N-linked (GlcNAc...) asparagine glycosylation occurs at Asn-1262. A Fibrillar collagen NC1 domain is found at 1266 to 1499; it reads PGVHATLKSL…GVEIGPVCFV (234 aa). 3 disulfides stabilise this stretch: Cys-1296/Cys-1328, Cys-1336/Cys-1497, and Cys-1405/Cys-1450. Positions 1314, 1316, 1317, and 1322 each coordinate Ca(2+). Residue Asn-1400 is glycosylated (N-linked (GlcNAc...) asparagine).

The protein belongs to the fibrillar collagen family. Trimers of two alpha 1(V) and one alpha 2(V) chains in most tissues and trimers of one alpha 1(V), one alpha 2(V), and one alpha 3(V) chains in placenta. Post-translationally, prolines at the third position of the tripeptide repeating unit (G-X-P) are hydroxylated in some or all of the chains. Probably 3-hydroxylated on Pro-919 and Pro-1156 by LEPREL1.

It is found in the secreted. The protein localises to the extracellular space. It localises to the extracellular matrix. Functionally, type V collagen is a member of group I collagen (fibrillar forming collagen). It is a minor connective tissue component of nearly ubiquitous distribution. Type V collagen binds to DNA, heparan sulfate, thrombospondin, heparin, and insulin. Type V collagen is a key determinant in the assembly of tissue-specific matrices. This chain is Collagen alpha-2(V) chain (COL5A2), found in Homo sapiens (Human).